Consider the following 137-residue polypeptide: Fibroblast growth factor 2 (137 aa).

Heparin is bound at residue asparagine 27. A Phosphotyrosine; by TEC modification is found at tyrosine 73. A Glycyl lysine isopeptide (Lys-Gly) (interchain with G-Cter in SUMO1) cross-link involves residue lysine 86. The heparin-binding stretch occupies residues 119 to 135 (KRTGQYKLGSKTGPGQK).

It belongs to the heparin-binding growth factors family. As to quaternary structure, monomer. Homodimer. Interacts with FGFR1, FGFR2, FGFR3 and FGFR4. Affinity between fibroblast growth factors (FGFs) and their receptors is increased by heparan sulfate glycosaminoglycans that function as coreceptors. Interacts with CSPG4, FGFBP1 and TEC. Found in a complex with FGFBP1, FGF1 and FGF2. Interacts with FGFBP3. Interacts with integrin ITGAV:ITGB3; the interaction is required for FGF2 signaling. Interacts with SNORC (via the extracellular domain). Interacts with glypican GPC3. Phosphorylation at Tyr-73 regulates FGF2 unconventional secretion.

Its subcellular location is the secreted. The protein localises to the nucleus. Its function is as follows. Acts as a ligand for FGFR1, FGFR2, FGFR3 and FGFR4. Also acts as an integrin ligand which is required for FGF2 signaling. Binds to integrin ITGAV:ITGB3. Plays an important role in the regulation of cell survival, cell division, cell differentiation and cell migration. Functions as a potent mitogen in vitro. Can induce angiogenesis. Mediates phosphorylation of ERK1/2 and thereby promotes retinal lens fiber differentiation. In Oryctolagus cuniculus (Rabbit), this protein is Fibroblast growth factor 2 (FGF2).